The primary structure comprises 71 residues: uncharacterized protein (71 aa).

The signal sequence occupies residues 1 to 23 (MTLLIILILKYLLCLENLKNISL). N-linked (GlcNAc...) asparagine glycosylation is found at Asn-20, Asn-28, Asn-44, and Asn-50.

Its subcellular location is the secreted. This is an uncharacterized protein from Dictyostelium discoideum (Social amoeba).